Here is a 409-residue protein sequence, read N- to C-terminus: Calsequestrin-2 (409 aa).

A signal peptide spans 1-19 (MKRAHLFVVGVYLLSSCRA). Tyr282 carries the phosphotyrosine modification. Asn335 carries N-linked (GlcNAc...) asparagine glycosylation. Residues 364–409 (DVLSGKINTEDDDNEDEDDDDDNDDDDDDNGNSDEEDNDDSDEDDE) are disordered. Residues 373-409 (EDDDNEDEDDDDDNDDDDDDNGNSDEEDNDDSDEDDE) are compositionally biased toward acidic residues.

It belongs to the calsequestrin family. In terms of assembly, monomer, homodimer and homooligomer. Mostly monomeric in the absence of calcium. Forms higher oligomers in a calcium-dependent manner. Dimers associate to form tetramers, that then form linear homomer chains. Interacts with ASPH and TRDN. Post-translationally, phosphorylation in the C-terminus, probably by CK2, moderately increases calcium buffering capacity. In terms of processing, N-glycosylated. In terms of tissue distribution, detected in heart muscle (at protein level).

The protein localises to the sarcoplasmic reticulum lumen. Functionally, calsequestrin is a high-capacity, moderate affinity, calcium-binding protein and thus acts as an internal calcium store in muscle. Calcium ions are bound by clusters of acidic residues at the protein surface, especially at the interface between subunits. Can bind around 60 Ca(2+) ions. Regulates the release of lumenal Ca(2+) via the calcium release channel RYR2; this plays an important role in triggering muscle contraction. Plays a role in excitation-contraction coupling in the heart and in regulating the rate of heart beats. The protein is Calsequestrin-2 (CASQ2) of Oryctolagus cuniculus (Rabbit).